The sequence spans 128 residues: Small ribosomal subunit protein bS6 (128 aa).

This sequence belongs to the bacterial ribosomal protein bS6 family.

Functionally, binds together with bS18 to 16S ribosomal RNA. This Acinetobacter baylyi (strain ATCC 33305 / BD413 / ADP1) protein is Small ribosomal subunit protein bS6.